The sequence spans 405 residues: Alpha-1-antiproteinase S (405 aa).

An N-terminal signal peptide occupies residues 1 to 24 (MPSAIPRGLLLLAGLCCLVFGIMA). N-linked (GlcNAc...) asparagine glycosylation is found at N57, N94, N157, and N258. Residues 360 to 379 (GATMMEFMPMSLPEDLSFNK) are RCL.

The protein belongs to the serpin family.

It is found in the secreted. Functionally, inhibits elastase, chymotrypsin, cathepsin G, plasmin, and trypsin. This chain is Alpha-1-antiproteinase S, found in Cavia porcellus (Guinea pig).